Consider the following 325-residue polypeptide: ADP-ribose glycohydrolase MACROD1 (325 aa).

Residues 21-55 (LGAPRPWPGPSPGATRTRSSACGPPASLSAHHPRA) are disordered. Lysine 96, lysine 103, and lysine 129 each carry N6-succinyllysine. Lysine 138 participates in a covalent cross-link: Glycyl lysine isopeptide (Lys-Gly) (interchain with G-Cter in SUMO2). The 182-residue stretch at 141-322 (EPKYKKDKQL…IYRERLPHYF (182 aa)) folds into the Macro domain. 159–161 (GDI) contributes to the substrate binding site. Lysine 163 bears the N6-acetyllysine mark. Substrate contacts are provided by residues 172-174 (AAN), 179-184 (GGGGVD), 267-273 (ISTGVFG), and phenylalanine 306.

This sequence belongs to the MacroD-type family. MacroD1/2-like subfamily. In terms of assembly, interacts with ESR1; Interacts in a manner that is estrogen independent but is enhanced by estrogen. Interacts (via macro domain) with AR.

The protein resides in the nucleus. The catalysed reaction is 3''-O-acetyl-ADP-D-ribose + H2O = ADP-D-ribose + acetate + H(+). It catalyses the reaction 2''-O-acetyl-ADP-D-ribose + H2O = ADP-D-ribose + acetate + H(+). It carries out the reaction 4-O-(ADP-D-ribosyl)-L-aspartyl-[protein] + H2O = L-aspartyl-[protein] + ADP-D-ribose + H(+). The enzyme catalyses 5-O-(ADP-D-ribosyl)-L-glutamyl-[protein] + H2O = L-glutamyl-[protein] + ADP-D-ribose + H(+). The catalysed reaction is alpha-NAD(+) + H2O = ADP-D-ribose + nicotinamide + H(+). With respect to regulation, subject to competitive inhibition by the product ADP-ribose. Functionally, removes ADP-ribose from aspartate and glutamate residues in proteins bearing a single ADP-ribose moiety. Inactive towards proteins bearing poly-ADP-ribose. Deacetylates O-acetyl-ADP ribose, a signaling molecule generated by the deacetylation of acetylated lysine residues in histones and other proteins. Plays a role in estrogen signaling. Binds to androgen receptor (AR) and amplifies the transactivation function of AR in response to androgen. May play an important role in carcinogenesis and/or progression of hormone-dependent cancers by feed-forward mechanism that activates ESR1 transactivation. Could be an ESR1 coactivator, providing a positive feedback regulatory loop for ESR1 signal transduction. Could be involved in invasive growth by down-regulating CDH1 in endometrial cancer cells. Enhances ESR1-mediated transcription activity. In Bos taurus (Bovine), this protein is ADP-ribose glycohydrolase MACROD1 (MACROD1).